The sequence spans 409 residues: Chaetoglobosin A biosynthesis cluster protein C (409 aa).

An HTH CENPB-type domain is found at 51-120; that stretch reads DLPANSRKLT…VKRQPQLRTR (70 aa). The H-T-H motif DNA-binding region spans 84–113; sequence RGVEDMANHLLRERDAPPVGKLWAHNFVKR. Disordered regions lie at residues 243-269 and 320-350; these read PTHP…ETRS and ANEP…QDPL. Residues 255–269 show a composition bias toward polar residues; it reads PWASKTPYNAQETRS.

The protein localises to the nucleus. Part of the gene cluster that mediates the biosynthesis of chaetoglobosin A which has a unique inhibitory activity against actin polymerization in mammalian cells. Chaetoglobosin A and its intermediates are involved in the morphological differentiation of C.globosum. The first step of the pathway is the synthesis of prochaetoglobosin I via condensation of one acetyl-CoA, 8 malonyl-CoA, and a L-tryptophan molecule by the PKS-NRPS hybrid synthetase cheA, followed by reduction of backbone double bond to install desired geometry by the enoyl reductase cheB. Further multiple oxidation steps performed by the cytochrome P450 monooxygenases cheE and cheG, as well as by the FAD-linked oxidoreductase cheF, lead to the formation of chaetoglobosin A. Depending on the order of action of these reductases, distinct intermediates can be identified. Within the pathway, the cytochrome P450 monooxygenase cheE catalyzes a stereospecific epoxidation on prochaetoglobosin I, cytoglobosin D, and chaetoglobosin J intermediates. The FAD-linked oxidoreductase cheF performs dehydrogenation of the C-20 hydroxyl groups in the 20-dihyrochaetoglobosin A and cytoglobosin D intermediates. Finally, the cytochrome P450 monooxygenase cheG can catalyze the stereospecific dihydroxylation of prochaetoglobosin I and prochaetoglobosin IV at C-19 and C-20, respectively. The Diels-Alderase cheD may play a role in the post-PKS-NRPS biosynthetic steps catalyzing Diels-Alder cyclization. This chain is Chaetoglobosin A biosynthesis cluster protein C, found in Chaetomium globosum (strain ATCC 6205 / CBS 148.51 / DSM 1962 / NBRC 6347 / NRRL 1970) (Soil fungus).